We begin with the raw amino-acid sequence, 405 residues long: 8-amino-7-oxononanoate synthase 2 (405 aa).

A substrate-binding site is contributed by R20. 116–117 (GY) provides a ligand contact to pyridoxal 5'-phosphate. H141 is a substrate binding site. Pyridoxal 5'-phosphate is bound by residues S187, H215, and T243. N6-(pyridoxal phosphate)lysine is present on K246. Residue T369 coordinates substrate.

Belongs to the class-II pyridoxal-phosphate-dependent aminotransferase family. BioF subfamily. In terms of assembly, homodimer. Requires pyridoxal 5'-phosphate as cofactor.

It catalyses the reaction 6-carboxyhexanoyl-[ACP] + L-alanine + H(+) = (8S)-8-amino-7-oxononanoate + holo-[ACP] + CO2. It participates in cofactor biosynthesis; biotin biosynthesis. Catalyzes the decarboxylative condensation of pimeloyl-[acyl-carrier protein] and L-alanine to produce 8-amino-7-oxononanoate (AON), [acyl-carrier protein], and carbon dioxide. This chain is 8-amino-7-oxononanoate synthase 2, found in Polaromonas sp. (strain JS666 / ATCC BAA-500).